Here is a 717-residue protein sequence, read N- to C-terminus: Serologically defined colon cancer antigen 8 homolog (717 aa).

A phosphoserine mark is found at Ser-4 and Ser-28. A disordered region spans residues Gln-84–Met-115. Coiled coils occupy residues Ile-129 to Arg-168, Asp-221 to Ser-278, Glu-352 to Tyr-590, and Arg-622 to Met-712. The interval Thr-216–Cys-717 is sufficient for homodimerization.

In terms of assembly, homodimer. Interacts with OFD1; the interaction is direct. Interacts with FAM161A. Interacts with RABEP2, ERC1 and CEP131. Expressed in liver, kidney, spleen, brain, heart and muscle. Expressed in photoreceptor cells of the retina.

It localises to the cytoplasm. Its subcellular location is the cytoskeleton. The protein resides in the microtubule organizing center. The protein localises to the centrosome. It is found in the centriole. It localises to the cilium basal body. Its subcellular location is the cell junction. In terms of biological role, plays a role in the establishment of cell polarity and epithelial lumen formation. Also plays an essential role in ciliogenesis and subsequent Hedgehog signaling pathway that requires the presence of intact primary cilia for pathway activation. Mechanistically, interacts with and mediates RABEP2 centrosomal localization which is critical for ciliogenesis. This is Serologically defined colon cancer antigen 8 homolog (Sdccag8) from Mus musculus (Mouse).